A 72-amino-acid chain; its full sequence is Translation initiation factor IF-1 (72 aa).

The S1-like domain occupies 1 to 72 (MAKEDTLEFP…TKGRINYRFK (72 aa)).

The protein belongs to the IF-1 family. Component of the 30S ribosomal translation pre-initiation complex which assembles on the 30S ribosome in the order IF-2 and IF-3, IF-1 and N-formylmethionyl-tRNA(fMet); mRNA recruitment can occur at any time during PIC assembly.

The protein localises to the cytoplasm. In terms of biological role, one of the essential components for the initiation of protein synthesis. Stabilizes the binding of IF-2 and IF-3 on the 30S subunit to which N-formylmethionyl-tRNA(fMet) subsequently binds. Helps modulate mRNA selection, yielding the 30S pre-initiation complex (PIC). Upon addition of the 50S ribosomal subunit IF-1, IF-2 and IF-3 are released leaving the mature 70S translation initiation complex. This chain is Translation initiation factor IF-1, found in Roseobacter denitrificans (strain ATCC 33942 / OCh 114) (Erythrobacter sp. (strain OCh 114)).